A 198-amino-acid polypeptide reads, in one-letter code: Large ribosomal subunit protein bL25 (198 aa).

It belongs to the bacterial ribosomal protein bL25 family. CTC subfamily. Part of the 50S ribosomal subunit; part of the 5S rRNA/L5/L18/L25 subcomplex. Contacts the 5S rRNA. Binds to the 5S rRNA independently of L5 and L18.

Functionally, this is one of the proteins that binds to the 5S RNA in the ribosome where it forms part of the central protuberance. The polypeptide is Large ribosomal subunit protein bL25 (Phocaeicola vulgatus (strain ATCC 8482 / DSM 1447 / JCM 5826 / CCUG 4940 / NBRC 14291 / NCTC 11154) (Bacteroides vulgatus)).